Here is a 604-residue protein sequence, read N- to C-terminus: Glutamine--fructose-6-phosphate aminotransferase [isomerizing] (604 aa).

Catalysis depends on Cys2, which acts as the Nucleophile; for GATase activity. Residues Cys2–Glu216 enclose the Glutamine amidotransferase type-2 domain. SIS domains lie at Leu281 to Ala420 and Val453 to Pro594. The For Fru-6P isomerization activity role is filled by Lys599.

In terms of assembly, homodimer.

It localises to the cytoplasm. The catalysed reaction is D-fructose 6-phosphate + L-glutamine = D-glucosamine 6-phosphate + L-glutamate. In terms of biological role, catalyzes the first step in hexosamine metabolism, converting fructose-6P into glucosamine-6P using glutamine as a nitrogen source. The protein is Glutamine--fructose-6-phosphate aminotransferase [isomerizing] of Thermus thermophilus (strain ATCC BAA-163 / DSM 7039 / HB27).